A 147-amino-acid polypeptide reads, in one-letter code: Hemoglobin subunit beta-1 (147 aa).

The region spanning 3 to 147 (KWSKTELTII…VVSALGKQYH (145 aa)) is the Globin domain. Heme b-binding residues include His-64 and His-93.

This sequence belongs to the globin family. Hb1 is a heterotetramer of two alpha chains and two beta-1 chains. Red blood cells.

Involved in oxygen transport from gills to the various peripheral tissues. This Cygnodraco mawsoni (Antarctic dragonfish) protein is Hemoglobin subunit beta-1 (hbb1).